Reading from the N-terminus, the 334-residue chain is L-lactate dehydrogenase B chain (334 aa).

At Ala-2 the chain carries N-acetylalanine. N6-acetyllysine is present on Lys-7. Residues 30-58 (GQVG…LEDK) and Arg-100 contribute to the NAD(+) site. Ser-44 bears the Phosphoserine mark. Residue Lys-58 is modified to N6-acetyllysine. Arg-107 contacts substrate. N6-acetyllysine is present on Lys-119. Asn-139 is a binding site for NAD(+). Substrate contacts are provided by Asn-139 and Arg-170. His-194 acts as the Proton acceptor in catalysis. Tyr-240 is modified (phosphotyrosine). Residue Thr-249 participates in substrate binding. N6-acetyllysine is present on Lys-329.

The protein belongs to the LDH/MDH superfamily. LDH family. As to quaternary structure, homotetramer. Interacts with PTEN upstream reading frame protein MP31; the interaction leads to inhibition of mitochondrial lactate dehydrogenase activity, preventing conversion of lactate to pyruvate in mitochondria.

It localises to the cytoplasm. The protein localises to the mitochondrion inner membrane. The catalysed reaction is (S)-lactate + NAD(+) = pyruvate + NADH + H(+). It functions in the pathway fermentation; pyruvate fermentation to lactate; (S)-lactate from pyruvate: step 1/1. Functionally, interconverts simultaneously and stereospecifically pyruvate and lactate with concomitant interconversion of NADH and NAD(+). This chain is L-lactate dehydrogenase B chain (LDHB), found in Sus scrofa (Pig).